The primary structure comprises 313 residues: 3'-5' exoribonuclease YhaM (313 aa).

The OB DNA-binding region spans 22–90 (SSVKGTASNG…QLKIRQIRQA (69 aa)). In terms of domain architecture, HD spans 163 to 279 (HVVSMLRLAK…LHQIDLMDAS (117 aa)).

This sequence belongs to the YhaM family.

Its function is as follows. Shows a 3'-5' exoribonuclease activity. The chain is 3'-5' exoribonuclease YhaM from Listeria monocytogenes serovar 1/2a (strain ATCC BAA-679 / EGD-e).